The primary structure comprises 233 residues: 4'-phosphopantetheinyl transferase psf-1 (233 aa).

The Mg(2+) site is built by Asp-110, Glu-112, and Glu-154. The segment at 161–192 (GKGISYGLSSFTARLSEDGQATLRLPDHEAPC) is peptidyl carrier protein binding.

The protein belongs to the P-Pant transferase superfamily. Gsp/Sfp/HetI/AcpT family. The cofactor is Mg(2+).

The catalysed reaction is apo-[peptidyl-carrier protein] + CoA = holo-[peptidyl-carrier protein] + adenosine 3',5'-bisphosphate + H(+). Probably activates the peptidyl carrier protein (PCP) domains of surfactin synthetase by transferring the 4'-phosphopantetheinyl moiety of coenzyme A (CoA) to a serine residue. Required for the production of the lipopeptide antibiotic, surfactin. The polypeptide is 4'-phosphopantetheinyl transferase psf-1 (psf-1) (Bacillus pumilus (Bacillus mesentericus)).